A 466-amino-acid polypeptide reads, in one-letter code: Methylenomycin A resistance protein (466 aa).

Transmembrane regions (helical) follow at residues 16–36 (ISVL…VTVV), 56–76 (WVVD…GALA), 83–103 (TIYI…AASI), 113–133 (LIQG…LAAS), 146–166 (LWAA…GVLV), 168–188 (LAGW…ALIS), 203–223 (VNII…YALI), 234–254 (VILV…LREI), 276–296 (FIGF…SLFL), 305–325 (FMAG…NLLF), 337–357 (LMFV…VLIS), 367–387 (VLMS…TTVI), 409–429 (IGAL…ATWY), and 434–454 (FAFL…WLFL).

The protein belongs to the major facilitator superfamily. EmrB family.

Its subcellular location is the cell membrane. Its function is as follows. Resistance to the epoxide antibiotic methylenomycin. This is Methylenomycin A resistance protein (mmr) from Bacillus subtilis (strain 168).